The sequence spans 325 residues: Putative metal ion transporter ZIPCO (325 aa).

A run of 3 helical transmembrane segments spans residues 5–25, 46–66, and 74–94; these read TFLALLIFVECVIVVYIPAYI, IASGAILALAFLHMLPEVIIL, and LYYIFILVLVSVTFLNITDIL. 2 N-linked (GlcNAc...) asparagine glycosylation sites follow: N106 and N160. The next 4 helical transmembrane spans lie at 179-199, 239-259, 264-284, and 296-316; these read FFIVLSLFIHSFIEGLLMGSL, IYAWSFILSLPLGVFIAIFSF, FVEIIFSSIACGFFLYLSFNM, and HFISFSYFLGVGGMSTLMILF.

Its subcellular location is the cytoplasmic vesicle membrane. Functionally, putative transporter for the divalent zinc and iron cations. The protein is Putative metal ion transporter ZIPCO of Plasmodium falciparum (isolate 3D7).